A 475-amino-acid polypeptide reads, in one-letter code: Ribulose bisphosphate carboxylase large chain (475 aa).

A propeptide spanning residues 1–2 (MS) is cleaved from the precursor. Pro3 carries the post-translational modification N-acetylproline. Residue Lys14 is modified to N6,N6,N6-trimethyllysine. Asn123 and Thr173 together coordinate substrate. The active-site Proton acceptor is the Lys175. Lys177 serves as a coordination point for substrate. 3 residues coordinate Mg(2+): Lys201, Asp203, and Glu204. Lys201 bears the N6-carboxylysine mark. The active-site Proton acceptor is the His294. 3 residues coordinate substrate: Arg295, His327, and Ser379.

Belongs to the RuBisCO large chain family. Type I subfamily. In terms of assembly, heterohexadecamer of 8 large chains and 8 small chains; disulfide-linked. The disulfide link is formed within the large subunit homodimers. Mg(2+) serves as cofactor. Post-translationally, the disulfide bond which can form in the large chain dimeric partners within the hexadecamer appears to be associated with oxidative stress and protein turnover.

The protein resides in the plastid. Its subcellular location is the chloroplast. It catalyses the reaction 2 (2R)-3-phosphoglycerate + 2 H(+) = D-ribulose 1,5-bisphosphate + CO2 + H2O. It carries out the reaction D-ribulose 1,5-bisphosphate + O2 = 2-phosphoglycolate + (2R)-3-phosphoglycerate + 2 H(+). Its function is as follows. RuBisCO catalyzes two reactions: the carboxylation of D-ribulose 1,5-bisphosphate, the primary event in carbon dioxide fixation, as well as the oxidative fragmentation of the pentose substrate in the photorespiration process. Both reactions occur simultaneously and in competition at the same active site. The polypeptide is Ribulose bisphosphate carboxylase large chain (Adiantum capillus-veneris (Maidenhair fern)).